The sequence spans 144 residues: 3-hydroxyacyl-[acyl-carrier-protein] dehydratase FabZ (144 aa).

The active site involves His47.

Belongs to the thioester dehydratase family. FabZ subfamily.

It is found in the cytoplasm. The enzyme catalyses a (3R)-hydroxyacyl-[ACP] = a (2E)-enoyl-[ACP] + H2O. Involved in unsaturated fatty acids biosynthesis. Catalyzes the dehydration of short chain beta-hydroxyacyl-ACPs and long chain saturated and unsaturated beta-hydroxyacyl-ACPs. In Nitrosomonas eutropha (strain DSM 101675 / C91 / Nm57), this protein is 3-hydroxyacyl-[acyl-carrier-protein] dehydratase FabZ.